A 366-amino-acid chain; its full sequence is Lipase member J (366 aa).

Residue Ser141 is the Nucleophile of the active site. Catalysis depends on charge relay system residues Asp312 and His341.

It belongs to the AB hydrolase superfamily. Lipase family.

This is Lipase member J (LIPJ) from Homo sapiens (Human).